Consider the following 209-residue polypeptide: Ancillary SecYEG translocon subunit (209 aa).

The Cytoplasmic segment spans residues methionine 1–lysine 23. The chain crosses the membrane as a helical span at residues tryptophan 24–tyrosine 42. The Periplasmic segment spans residues glutamine 43–lysine 209. The stretch at proline 161–aspartate 194 is one TPR repeat.

Belongs to the YfgM family. Interacts with the SecYEG translocon. Forms a complex with PpiD.

It is found in the cell inner membrane. Functionally, may mediate protein transfer from the SecYEG translocon to the periplasmic chaperone network via its periplasmic C-terminal region. The chain is Ancillary SecYEG translocon subunit from Neisseria gonorrhoeae (strain ATCC 700825 / FA 1090).